Consider the following 114-residue polypeptide: Phosphoribosyl-AMP cyclohydrolase (114 aa).

D76 contributes to the Mg(2+) binding site. Zn(2+) is bound at residue C77. 2 residues coordinate Mg(2+): D78 and D80. Zn(2+) is bound by residues C93 and C100.

The protein belongs to the PRA-CH family. Homodimer. The cofactor is Mg(2+). Requires Zn(2+) as cofactor.

It localises to the cytoplasm. It catalyses the reaction 1-(5-phospho-beta-D-ribosyl)-5'-AMP + H2O = 1-(5-phospho-beta-D-ribosyl)-5-[(5-phospho-beta-D-ribosylamino)methylideneamino]imidazole-4-carboxamide. The protein operates within amino-acid biosynthesis; L-histidine biosynthesis; L-histidine from 5-phospho-alpha-D-ribose 1-diphosphate: step 3/9. In terms of biological role, catalyzes the hydrolysis of the adenine ring of phosphoribosyl-AMP. In Streptococcus sanguinis (strain SK36), this protein is Phosphoribosyl-AMP cyclohydrolase.